The chain runs to 116 residues: Iron-sulfur cluster insertion protein ErpA (116 aa).

Positions 44, 108, and 110 each coordinate iron-sulfur cluster.

This sequence belongs to the HesB/IscA family. As to quaternary structure, homodimer. Iron-sulfur cluster serves as cofactor.

Its function is as follows. Required for insertion of 4Fe-4S clusters for at least IspG. This chain is Iron-sulfur cluster insertion protein ErpA, found in Pseudomonas fluorescens (strain Pf0-1).